The following is a 113-amino-acid chain: U11-theraphotoxin-Hhn1a (113 aa).

The first 21 residues, 1 to 21, serve as a signal peptide directing secretion; sequence MNTVRVTFLLVFVLAVSLGRA. A propeptide spanning residues 22 to 74 is cleaved from the precursor; sequence DKDENRMEMQEKTEQGKSYLDFAENLLLQKLEELEAKLLEEDSEESRNSRQKR. Disulfide bonds link C75–C90, C82–C95, and C89–C110.

This sequence belongs to the neurotoxin 14 (magi-1) family. 01 (HNTX-16) subfamily. In terms of tissue distribution, expressed by the venom gland.

It is found in the secreted. In terms of biological role, probable ion channel inhibitor. The protein is U11-theraphotoxin-Hhn1a of Cyriopagopus hainanus (Chinese bird spider).